The following is a 179-amino-acid chain: MLHRDDHINPPRPRGLDVPCARLRATNPLRALARCVQAGKPGTSSGHRSVPHTADLRIEAWAPTRDGCIRQAVLGTVESFLDLESAHAVHTRLRRLTADRDDDLLVAVLEEVIYLLDTVGETPVDLRLRDVDGGVDVTFATTDASTLVQVGAVPKAVSLNELRFSQGRHGWRCAVTLDV.

Ca(2+) contacts are provided by aspartate 55, aspartate 178, and valine 179.

This sequence belongs to the archease family.

Activates the tRNA-splicing ligase complex by facilitating the enzymatic turnover of catalytic subunit RtcB. Acts by promoting the guanylylation of RtcB, a key intermediate step in tRNA ligation. Can also alter the NTP specificity of RtcB such that ATP, dGTP or ITP is used efficiently. The polypeptide is Probable protein archease (Mycobacterium tuberculosis (strain CDC 1551 / Oshkosh)).